The primary structure comprises 1066 residues: Glucose transport transcription regulator RGT1 (1066 aa).

2 stretches are compositionally biased toward polar residues: residues Met1–Glu11 and Val42–Ala57. Disordered regions lie at residues Met1–Gln70, Pro108–Pro153, Tyr214–Tyr285, Gly298–Leu399, Asp616–Arg645, and Met849–Lys871. Residues Cys68–Cys97 constitute a DNA-binding region (zn(2)-C6 fungal-type). Polar residues-rich tracts occupy residues Val118–Ala131, Glu139–Gly148, Gly260–Ser270, and Met314–Met327. 2 stretches are compositionally biased toward low complexity: residues Asn328–Pro350 and Ser622–Asn641. The span at Gly855 to Lys871 shows a compositional bias: polar residues.

Belongs to the EDS1/RGT1 family.

It is found in the nucleus. It localises to the cytoplasm. Glucose-responsive transcription factor that regulates expression of several glucose transporter (HXT) genes in response to glucose. In the absence of glucose, it functions as a transcriptional repressor, whereas high concentrations of glucose cause it to function as a transcriptional activator. In cells growing on low levels of glucose, has a neutral role, neither repressing nor activating transcription. The sequence is that of Glucose transport transcription regulator RGT1 (RGT1) from Zygosaccharomyces rouxii (strain ATCC 2623 / CBS 732 / NBRC 1130 / NCYC 568 / NRRL Y-229).